The sequence spans 513 residues: Bifunctional purine biosynthesis protein PurH (513 aa).

In terms of domain architecture, MGS-like spans 1-145 (MTKKAIISVY…KNFKYITVII (145 aa)).

It belongs to the PurH family.

It catalyses the reaction (6R)-10-formyltetrahydrofolate + 5-amino-1-(5-phospho-beta-D-ribosyl)imidazole-4-carboxamide = 5-formamido-1-(5-phospho-D-ribosyl)imidazole-4-carboxamide + (6S)-5,6,7,8-tetrahydrofolate. The catalysed reaction is IMP + H2O = 5-formamido-1-(5-phospho-D-ribosyl)imidazole-4-carboxamide. It participates in purine metabolism; IMP biosynthesis via de novo pathway; 5-formamido-1-(5-phospho-D-ribosyl)imidazole-4-carboxamide from 5-amino-1-(5-phospho-D-ribosyl)imidazole-4-carboxamide (10-formyl THF route): step 1/1. It functions in the pathway purine metabolism; IMP biosynthesis via de novo pathway; IMP from 5-formamido-1-(5-phospho-D-ribosyl)imidazole-4-carboxamide: step 1/1. The polypeptide is Bifunctional purine biosynthesis protein PurH (Caldicellulosiruptor saccharolyticus (strain ATCC 43494 / DSM 8903 / Tp8T 6331)).